The primary structure comprises 332 residues: Transcription factor HBP-1b(c38) (332 aa).

Residues 1-48 (MAEASPRTETSTDDTDENLMLEPGNAALAVVSDSSDRSRDKNGDQKTM) form a disordered region. The segment covering 34-47 (SSDRSRDKNGDQKT) has biased composition (basic and acidic residues). The region spanning 44–107 (DQKTMRRLAQ…SSADQSHSMS (64 aa)) is the bZIP domain. Residues 46-66 (KTMRRLAQNREAARKSRLRKK) are basic motif. A coiled-coil region spans residues 47 to 142 (TMRRLAQNRE…RAAVNAHAGD (96 aa)). The leucine-zipper stretch occupies residues 72–86 (LENSRLKLTQLEQEL). One can recognise a DOG1 domain in the interval 111-329 (ALAFDTEYAR…RALSSLWLAR (219 aa)).

It belongs to the bZIP family. Binds DNA as a dimer.

Its subcellular location is the nucleus. Functionally, transcriptional activator that binds specifically to the DNA sequence 5'-TGACG-3'. Recognizes ocs elements like the as-1 motif of the cauliflower mosaic virus 35S promoter. Binding to the as-1-like cis elements mediate auxin- and salicylic acid-inducible transcription. Binds to the hexamer motif 5'-ACGTCA-3' of histone gene promoters. In Triticum aestivum (Wheat), this protein is Transcription factor HBP-1b(c38).